The primary structure comprises 383 residues: UDP-N-acetylenolpyruvoylglucosamine reductase (383 aa).

Basic and acidic residues predominate over residues 1–13 (MRTRRDVPADRSG). Positions 1–26 (MRTRRDVPADRSGRSRVSRHPGLSVP) are disordered. The FAD-binding PCMH-type domain occupies 49–215 (LGGPATRLLT…LRVRFELENA (167 aa)). Arg-192 is a catalytic residue. The active-site Proton donor is the Ser-271. Glu-375 is a catalytic residue.

Belongs to the MurB family. FAD is required as a cofactor.

The protein localises to the cytoplasm. It carries out the reaction UDP-N-acetyl-alpha-D-muramate + NADP(+) = UDP-N-acetyl-3-O-(1-carboxyvinyl)-alpha-D-glucosamine + NADPH + H(+). It functions in the pathway cell wall biogenesis; peptidoglycan biosynthesis. Cell wall formation. The chain is UDP-N-acetylenolpyruvoylglucosamine reductase from Streptomyces coelicolor (strain ATCC BAA-471 / A3(2) / M145).